The following is an 813-amino-acid chain: UPF0508 protein KLLA0A06237g (813 aa).

The segment at 478 to 537 is disordered; the sequence is KKDKSKSQKNSTDSLAKLSDTKSIHPPESAMSSHASTPSSTSKSSKSSKSSSTLSPSTCK. The segment covering 506–537 has biased composition (low complexity); that stretch reads SAMSSHASTPSSTSKSSKSSKSSSTLSPSTCK.

Belongs to the UPF0508 family.

The polypeptide is UPF0508 protein KLLA0A06237g (Kluyveromyces lactis (strain ATCC 8585 / CBS 2359 / DSM 70799 / NBRC 1267 / NRRL Y-1140 / WM37) (Yeast)).